A 105-amino-acid polypeptide reads, in one-letter code: Large ribosomal subunit protein uL24 (105 aa).

This sequence belongs to the universal ribosomal protein uL24 family. In terms of assembly, part of the 50S ribosomal subunit.

In terms of biological role, one of two assembly initiator proteins, it binds directly to the 5'-end of the 23S rRNA, where it nucleates assembly of the 50S subunit. Functionally, one of the proteins that surrounds the polypeptide exit tunnel on the outside of the subunit. The sequence is that of Large ribosomal subunit protein uL24 from Methylocella silvestris (strain DSM 15510 / CIP 108128 / LMG 27833 / NCIMB 13906 / BL2).